Reading from the N-terminus, the 657-residue chain is Folic acid synthesis protein FOL1 (657 aa).

A DHNA region spans residues 1–116 (MDKIIIKDLL…WPGVQIERTL (116 aa)). An HPPK region spans residues 149-274 (YLAFGSNLGD…FVLLPLSDIA (126 aa)). One can recognise a Pterin-binding domain in the interval 333–641 (TFIMGILNVT…DIPEIRDAML (309 aa)). Positions 335 to 657 (IMGILNVTPD…KPQRRYQIQK (323 aa)) are DHPS. Asn-340 lines the Mg(2+) pocket. 3 residues coordinate (7,8-dihydropterin-6-yl)methyl diphosphate: Thr-380, Asp-416, and Asn-435. The disordered stretch occupies residues 466-524 (LNNSNDSNSNSSINTNGEDNNNNNNNNNNNNNNNNNNNNNNNNNDDNDNDNRSKIKQKI). Residues 467–509 (NNSNDSNSNSSINTNGEDNNNNNNNNNNNNNNNNNNNNNNNNN) are compositionally biased toward low complexity. A compositionally biased stretch (basic and acidic residues) spans 514 to 524 (NDNRSKIKQKI). (7,8-dihydropterin-6-yl)methyl diphosphate-binding positions include Asp-547, Lys-583, and 629-631 (RIH).

In the N-terminal section; belongs to the DHNA family. It in the central section; belongs to the HPPK family. The protein in the C-terminal section; belongs to the DHPS family. Requires Mg(2+) as cofactor.

The catalysed reaction is 7,8-dihydroneopterin = 6-hydroxymethyl-7,8-dihydropterin + glycolaldehyde. It carries out the reaction 6-hydroxymethyl-7,8-dihydropterin + ATP = (7,8-dihydropterin-6-yl)methyl diphosphate + AMP + H(+). It catalyses the reaction (7,8-dihydropterin-6-yl)methyl diphosphate + 4-aminobenzoate = 7,8-dihydropteroate + diphosphate. The protein operates within cofactor biosynthesis; tetrahydrofolate biosynthesis; 2-amino-4-hydroxy-6-hydroxymethyl-7,8-dihydropteridine diphosphate from 7,8-dihydroneopterin triphosphate: step 3/4. Its pathway is cofactor biosynthesis; tetrahydrofolate biosynthesis; 2-amino-4-hydroxy-6-hydroxymethyl-7,8-dihydropteridine diphosphate from 7,8-dihydroneopterin triphosphate: step 4/4. It participates in cofactor biosynthesis; tetrahydrofolate biosynthesis; 7,8-dihydrofolate from 2-amino-4-hydroxy-6-hydroxymethyl-7,8-dihydropteridine diphosphate and 4-aminobenzoate: step 1/2. Its function is as follows. Catalyzes three sequential steps of tetrahydrofolate biosynthesis. This is Folic acid synthesis protein FOL1 (fol1) from Dictyostelium discoideum (Social amoeba).